Consider the following 301-residue polypeptide: Prohibitin-2 (301 aa).

Necessary for transcriptional repression stretches follow at residues 19-49 (MGTAMKLLLGAGAVAYAVKESVFTVEGGHRA) and 150-174 (ASQLITQRAQVSLLIRRELTERAKD). Residues 191 to 237 (REYTAAVESKQVAQQEAQRAQFLVEKAKQDQKQKIVQAEGEAAAAKM) adopt a coiled-coil conformation.

This sequence belongs to the prohibitin family. In terms of assembly, the mitochondrial prohibitin complex consists of two subunits (PHB1 and PHB2), assembled into a membrane-associated ring-shaped supercomplex of approximately 1 mDa.

Its subcellular location is the mitochondrion inner membrane. The protein localises to the cytoplasm. The protein resides in the nucleus. It localises to the cell membrane. Its function is as follows. Protein with pleiotropic attributes mediated in a cell-compartment- and tissue-specific manner, which include the plasma membrane-associated cell signaling functions, mitochondrial chaperone, and transcriptional co-regulator of transcription factors and sex steroid hormones in the nucleus. Functionally, in the mitochondria, together with PHB, forms large ring complexes (prohibitin complexes) in the inner mitochondrial membrane (IMM) and functions as a chaperone protein that stabilizes mitochondrial respiratory enzymes and maintains mitochondrial integrity in the IMM, which is required for mitochondrial morphogenesis, neuronal survival, and normal lifespan. In the nucleus, serves as transcriptional co-regulator. This is Prohibitin-2 (phb2) from Xenopus tropicalis (Western clawed frog).